The primary structure comprises 90 residues: uncharacterized protein (90 aa).

Positions 1 to 18 are cleaved as a signal peptide; sequence MSRALFAVVLAFPLIALA.

This is an uncharacterized protein from Escherichia coli (strain K12).